Reading from the N-terminus, the 216-residue chain is Chaperone protein TorD (216 aa).

It belongs to the TorD/DmsD family. TorD subfamily.

It is found in the cytoplasm. Functionally, involved in the biogenesis of TorA. Acts on TorA before the insertion of the molybdenum cofactor and, as a result, probably favors a conformation of the apoenzyme that is competent for acquiring the cofactor. This chain is Chaperone protein TorD, found in Ferrimonas balearica (strain DSM 9799 / CCM 4581 / KCTC 23876 / PAT).